Consider the following 70-residue polypeptide: Putative ankyrin repeat protein RC0502 (70 aa).

One copy of the ANK repeat lies at 9–43 (KGRIPIHYATYSKQHEITQILILLQPGSEIDTVDN).

The chain is Putative ankyrin repeat protein RC0502 from Rickettsia conorii (strain ATCC VR-613 / Malish 7).